The primary structure comprises 212 residues: High frequency lysogenization protein HflD homolog (212 aa).

Belongs to the HflD family.

The protein localises to the cytoplasm. It is found in the cell inner membrane. This chain is High frequency lysogenization protein HflD homolog, found in Pectobacterium carotovorum subsp. carotovorum (strain PC1).